The following is a 145-amino-acid chain: Transcription antitermination protein NusB (145 aa).

The protein belongs to the NusB family.

Involved in transcription antitermination. Required for transcription of ribosomal RNA (rRNA) genes. Binds specifically to the boxA antiterminator sequence of the ribosomal RNA (rrn) operons. This chain is Transcription antitermination protein NusB, found in Paraburkholderia phymatum (strain DSM 17167 / CIP 108236 / LMG 21445 / STM815) (Burkholderia phymatum).